Consider the following 759-residue polypeptide: LPS-assembly protein LptD (759 aa).

Positions M1–A22 are cleaved as a signal peptide.

This sequence belongs to the LptD family. As to quaternary structure, component of the lipopolysaccharide transport and assembly complex. Interacts with LptE and LptA.

It localises to the cell outer membrane. Its function is as follows. Together with LptE, is involved in the assembly of lipopolysaccharide (LPS) at the surface of the outer membrane. The protein is LPS-assembly protein LptD of Alcanivorax borkumensis (strain ATCC 700651 / DSM 11573 / NCIMB 13689 / SK2).